The chain runs to 144 residues: Maximins 11/H1 (144 aa).

The N-terminal stretch at 1–18 (MNFKYIVAVSFLIASAYA) is a signal peptide. Positions 19 to 43 (RSEENDEQSLSQRDVLEEESLREIR) are excised as a propeptide. Asn70 is subject to Asparagine amide. Residues 74 to 123 (TAEDHEVMKRLEAVMRDLDSLDYPEEASERETRGFNQEEIANLFTKKEKR) constitute a propeptide that is removed on maturation. The residue at position 143 (Leu143) is a Leucine amide.

It belongs to the bombinin family. In terms of tissue distribution, expressed by the skin glands.

It localises to the secreted. Its function is as follows. Maximin-11 shows antimicrobial activity against bacteria and against the fungus C.albicans. It has little hemolytic activity. In terms of biological role, maximin-H1 shows antibacterial activity against both Gram-positive and Gram-negative bacteria. It also shows antimicrobial activity against the fungus C.albicans. Shows strong hemolytic activity. This is Maximins 11/H1 from Bombina maxima (Giant fire-bellied toad).